The chain runs to 261 residues: Ribonuclease HII (261 aa).

The region spanning 72–260 (AVICGIDEVG…IKSIVLEKLD (189 aa)) is the RNase H type-2 domain. A divalent metal cation is bound by residues aspartate 78, glutamate 79, and aspartate 170.

This sequence belongs to the RNase HII family. The cofactor is Mn(2+). Requires Mg(2+) as cofactor.

It is found in the cytoplasm. It catalyses the reaction Endonucleolytic cleavage to 5'-phosphomonoester.. Functionally, endonuclease that specifically degrades the RNA of RNA-DNA hybrids. The polypeptide is Ribonuclease HII (Staphylococcus carnosus (strain TM300)).